Reading from the N-terminus, the 392-residue chain is uncharacterized protein (392 aa).

It belongs to the glycosyltransferase group 1 family. Glycosyltransferase 4 subfamily.

This is an uncharacterized protein from Methanocaldococcus jannaschii (strain ATCC 43067 / DSM 2661 / JAL-1 / JCM 10045 / NBRC 100440) (Methanococcus jannaschii).